Here is a 706-residue protein sequence, read N- to C-terminus: Integrator complex subunit 13 (706 aa).

The interval 564-603 is disordered; it reads PPEEEERKKRGRKREDKEDKSEKAVKDYEQEKSWQDSERL. Positions 567 to 622 form a coiled coil; it reads EEERKKRGRKREDKEDKSEKAVKDYEQEKSWQDSERLKGILERGKEELAEAEIIKD. Positions 572-582 match the Nuclear localization signal (NLS) motif; that stretch reads KRGRKREDKED. Residue lysine 611 forms a Glycyl lysine isopeptide (Lys-Gly) (interchain with G-Cter in SUMO2) linkage. The segment covering 615 to 636 has biased composition (basic and acidic residues); the sequence is AEAEIIKDSPDSPEPPNKKPLV. Residues 615–650 are disordered; that stretch reads AEAEIIKDSPDSPEPPNKKPLVEMDETPQVEKSKGP. A phosphoserine mark is found at serine 623, serine 626, and serine 678. The tract at residues 649–694 is cleavage module binding motif (CMBM); that stretch reads GPVSLLSLWSNRINTANSRKHQEFAGRLNSVNNRAELYQHLKEENG.

It belongs to the Integrator subunit 13 family. As to quaternary structure, component of the Integrator complex, composed of core subunits INTS1, INTS2, INTS3, INTS4, INTS5, INTS6, INTS7, INTS8, INTS9/RC74, INTS10, INTS11/CPSF3L, INTS12, INTS13, INTS14 and INTS15. The core complex associates with protein phosphatase 2A subunits PPP2CA and PPP2R1A, to form the Integrator-PP2A (INTAC) complex. INTS13 is part of the tail subcomplex, composed of INTS10, INTS13, INTS14 and INTS15. Interacts with transcription factors ZNF609 and ZNF655. Interacts with PAFAH1B1; this interaction may be required for proper recruitment of dynein complexes to the nuclear envelope at prophase. In terms of tissue distribution, widely expressed. Tends to be up-regulated in seminomas compared to normal testis.

The protein resides in the nucleus. It is found in the cytoplasm. Functionally, component of the integrator complex, a multiprotein complex that terminates RNA polymerase II (Pol II) transcription in the promoter-proximal region of genes. The integrator complex provides a quality checkpoint during transcription elongation by driving premature transcription termination of transcripts that are unfavorably configured for transcriptional elongation: the complex terminates transcription by (1) catalyzing dephosphorylation of the C-terminal domain (CTD) of Pol II subunit POLR2A/RPB1 and SUPT5H/SPT5, (2) degrading the exiting nascent RNA transcript via endonuclease activity and (3) promoting the release of Pol II from bound DNA. The integrator complex is also involved in terminating the synthesis of non-coding Pol II transcripts, such as enhancer RNAs (eRNAs), small nuclear RNAs (snRNAs), telomerase RNAs and long non-coding RNAs (lncRNAs). Within the integrator complex, INTS13 is part of the integrator tail module and acts as a platform for the recruitment of transcription factors at promoters. At prophase, mediates recruitment of cytoplasmic dynein to the nuclear envelope, a step important for proper centrosome-nucleus coupling. At G2/M phase, may be required for proper spindle formation and execution of cytokinesis. The polypeptide is Integrator complex subunit 13 (Homo sapiens (Human)).